We begin with the raw amino-acid sequence, 494 residues long: MQRWLQLWKMDLVQKVSHGVFEGSSEEPAALMNHDYIVLGEVYPERDEESGAEQCEQDCRYRGEAVSDGFLSSLFGREISSYTKEFLLDVQSRVNFTYRTRFVPIARAPDGPSPLSLNLLVRTNPISTIEDYIANPDCFNTDIGWGCMIRTGQSLLGNALQILHLGRDFRVNGNESLERESKFVNWFNDTPEAPFSLHNFVSAGTELSDKRPGEWFGPAATARSIQSLIYGFPECGIDDCIVSVSSGDIYENEVEKVFAENPNSRILFLLGVKLGINAVNESYRESICGILSSTQSVGIAGGRPSSSLYFFGYQGNEFLHFDPHIPQPAVEDSFVESCHTSKFGKLQLSEMDPSMLIGILIKGEKDWQQWKLEVAESAIINVLAKRMDDFDVSCSMDDVESVSSNSMKKDASNNENLGVLEGDYVDIGAIFPHTTNTEDVDEYDCFQDIHCKKQKIVVMGNTHTVNANLTDYEVEGVLVEKETVGIHSPIDEKC.

The short motif at 102 to 105 (FVPI) is the APEAR element. Cys147 serves as the catalytic Nucleophile. Ser307 carries the post-translational modification Phosphoserine. Residues Asp322 and His324 contribute to the active site. The cysteines at positions 338 and 394 are disulfide-linked. Residues 424–427 (YVDI) carry the LIR motif. The residue at position 488 (Ser488) is a Phosphoserine.

This sequence belongs to the peptidase C54 family. As to quaternary structure, interacts with ATG8. Interacts with TUB1 and TUB2. Post-translationally, phosphorylation at Ser-307 by ATG1 inhibits autophagy: it takes place on autophagosome membranes and decreases its interaction with ATG8, thereby impairing deconjugation of PE-conjugated forms of ATG8. Formation of a disulfide bond between Cys-338 and Cys-394 leads to reduced autophagy. The disulfide bond is reduced by thioredoxin.

It localises to the cytoplasm. The protein resides in the nucleus. Its subcellular location is the preautophagosomal structure. It catalyses the reaction [protein]-C-terminal L-amino acid-glycyl-phosphatidylethanolamide + H2O = [protein]-C-terminal L-amino acid-glycine + a 1,2-diacyl-sn-glycero-3-phosphoethanolamine. In terms of biological role, cysteine protease that plays a key role in cytoplasm to vacuole transport (Cvt) and autophagy by mediating both proteolytic activation and delipidation of ATG8. Required for selective autophagic degradation of the nucleus (nucleophagy) as well as for mitophagy which contributes to regulate mitochondrial quantity and quality by eliminating the mitochondria to a basal level to fulfill cellular energy requirements and preventing excess ROS production. The protease activity is required for proteolytic activation of ATG8: cleaves the C-terminal amino acid of ATG8 to reveal a C-terminal glycine. ATG8 ubiquitin-like activity requires the exposure of the glycine at the C-terminus for its conjugation to phosphatidylethanolamine (PE) and its insertion to membranes, which is necessary for autophagy. The ATG8-PE conjugate mediates tethering between adjacent membranes and stimulates membrane hemifusion, leading to expansion of the autophagosomal membrane during autophagy. In addition to the protease activity, also catalyzes deconjugation of PE-conjugated forms of ATG8 during macroautophagy: ATG8 delipidation is required to release the protein from membranes, which facilitates multiple events during macroautophagy, and especially for efficient autophagosome biogenesis, the assembly of ATG9-containing tubulovesicular clusters into phagophores/autophagosomes, and for the disassembly of PAS-associated ATG components. ATG8 delipidation by ATG4 also recycles ATG8-PE generated on inappropriate membranes to maintain a reservoir of unlipidated ATG8 that is required for autophagosome formation at the PAS. The chain is Cysteine protease ATG4 (ATG4) from Saccharomyces cerevisiae (strain YJM789) (Baker's yeast).